Consider the following 371-residue polypeptide: Cytochrome b (371 aa).

4 helical membrane-spanning segments follow: residues Phe25–Val45, Trp69–Ile90, Trp105–Leu125, and Phe170–Ile190. 2 residues coordinate heme b: His75 and His89. Residues His174 and His188 each contribute to the heme b site. His193 contacts a ubiquinone. Helical transmembrane passes span Tyr218–Phe238, Leu280–His300, Leu312–Thr332, and Tyr339–Pro358.

Belongs to the cytochrome b family. The cytochrome bc1 complex contains 3 respiratory subunits (MT-CYB, CYC1 and UQCRFS1), 2 core proteins (UQCRC1 and UQCRC2) and probably 6 low-molecular weight proteins. Requires heme b as cofactor.

It is found in the mitochondrion inner membrane. Its function is as follows. Component of the ubiquinol-cytochrome c reductase complex (complex III or cytochrome b-c1 complex) that is part of the mitochondrial respiratory chain. The b-c1 complex mediates electron transfer from ubiquinol to cytochrome c. Contributes to the generation of a proton gradient across the mitochondrial membrane that is then used for ATP synthesis. This chain is Cytochrome b (MT-CYB), found in Simalia amethistina (Amethystine python).